A 192-amino-acid polypeptide reads, in one-letter code: Phage-like element PBSX protein XkdU (192 aa).

This sequence to B.subtilis YqcA.

The sequence is that of Phage-like element PBSX protein XkdU (xkdU) from Bacillus subtilis (strain 168).